A 400-amino-acid chain; its full sequence is Protein phosphatase methylesterase 1 (400 aa).

Positions 1-72 (MSDLQRTWAK…NQKLFARPQG (72 aa)) are disordered. The segment covering 19–28 (PFDEPQEEQG) has biased composition (acidic residues). A compositionally biased stretch (low complexity) spans 44–54 (SSASSASSVSS). Polar residues predominate over residues 55–64 (TGTIIPSPNQ). Catalysis depends on residues Ser202, Asp228, and His358.

Belongs to the AB hydrolase superfamily.

The catalysed reaction is [phosphatase 2A protein]-C-terminal L-leucine methyl ester + H2O = [phosphatase 2A protein]-C-terminal L-leucine + methanol + H(+). In terms of biological role, demethylates proteins that have been reversibly carboxymethylated. Demethylates the phosphatase PP2A catalytic subunit. The protein is Protein phosphatase methylesterase 1 (PPE1) of Gibberella zeae (strain ATCC MYA-4620 / CBS 123657 / FGSC 9075 / NRRL 31084 / PH-1) (Wheat head blight fungus).